Consider the following 1462-residue polypeptide: Gag-Pol polyprotein (1462 aa).

G2 is lipidated: N-myristoyl glycine; by host. The segment at 7–31 (VLRGKKADELEKIRLRPGGKKKYRL) is interaction with Gp41. Positions 16-22 (LEKIRLR) match the Nuclear export signal motif. The short motif at 26–32 (KKKYRLK) is the Nuclear localization signal element. Positions 191 to 228 (NCVGDHQAAMQIIREIINEEAADWDVQHPIPGPLPAGQ) are interaction with human PPIA/CYPA and NUP153. Residues 279 to 364 (YNPTNILDIK…GGPGQKARLM (86 aa)) are dimerization/Multimerization of capsid protein p24. CCHC-type zinc fingers lie at residues 388–405 (IKCW…QCRA) and 409–426 (QGCW…NCPD). Positions 441 to 507 (APQLPRGPKF…RRDTTQRDDR (67 aa)) are disordered. A compositionally biased stretch (low complexity) spans 454–468 (NTNSTPNGSSSGPTG). 2 stretches are compositionally biased toward basic and acidic residues: residues 471 to 490 (HAAR…RSDR) and 497 to 507 (ARRDTTQRDDR). The segment at 512–516 (PQFSL) is dimerization of protease. The Peptidase A2 domain occupies 531 to 600 (VEVLLDTGAD…TPINIFGRNI (70 aa)). D536 acts as the For protease activity; shared with dimeric partner in catalysis. Dimerization of protease regions lie at residues 560–566 (GIGGFIN) and 599–611 (NILT…LNLP). A Reverse transcriptase domain is found at 654–844 (EGQLEEAPPT…PPYQWMGYEL (191 aa)). The Mg(2+) site is built by D720, D795, and D796. The segment at 837 to 845 (YQWMGYELW) is RT 'primer grip'. Residues 1007–1023 (WEQWWDNYWQVTWIPDW) carry the Tryptophan repeat motif motif. In terms of domain architecture, RNase H type-1 spans 1043–1166 (IPGAETFYTD…IDHLVSQGIR (124 aa)). Positions 1052, 1087, 1107, and 1158 each coordinate Mg(2+). The Integrase-type zinc-finger motif lies at 1172–1213 (ERIEPAQEEHGKYHSNVKELAHKFGLPNLVARQIVNTCAQCQ). Residues H1181, H1185, C1209, and C1212 each coordinate Zn(2+). Residues 1222–1373 (QVNAELGTWQ…TPVERLVNMI (152 aa)) enclose the Integrase catalytic domain. Residues D1233, D1285, and E1321 each coordinate Mg(2+). The integrase-type DNA-binding region spans 1392 to 1439 (FRVYFREGRNQLWQGPGELLWKGDGAVIVKVGTDIKVIPRRKAKIIRD). The tract at residues 1443 to 1462 (RQEMDSGSHLEGAREDGEMA) is disordered.

Homotrimer; further assembles as hexamers of trimers. Interacts with gp41 (via C-terminus). Interacts with host CALM1; this interaction induces a conformational change in the Matrix protein, triggering exposure of the myristate group. Interacts with host AP3D1; this interaction allows the polyprotein trafficking to multivesicular bodies during virus assembly. Part of the pre-integration complex (PIC) which is composed of viral genome, matrix protein, Vpr and integrase. As to quaternary structure, homodimer; the homodimer further multimerizes as homohexamers or homopentamers. Interacts with human PPIA/CYPA. Interacts with human NUP153. Interacts with host PDZD8; this interaction stabilizes the capsid. Interacts with monkey TRIM5; this interaction destabilizes the capsid. In terms of assembly, homodimer, whose active site consists of two apposed aspartic acid residues. Heterodimer of p66 RT and p51 RT (RT p66/p51). Heterodimerization of RT is essential for DNA polymerase activity. The overall folding of the subdomains is similar in p66 RT and p51 RT but the spatial arrangements of the subdomains are dramatically different. As to quaternary structure, homotetramer; may further associate as a homohexadecamer. Part of the pre-integration complex (PIC) which is composed of viral genome, matrix protein, Vpr and integrase. Interacts with human SMARCB1/INI1 and human PSIP1/LEDGF isoform 1. Interacts with human KPNA3; this interaction might play a role in nuclear import of the pre-integration complex. Interacts with human NUP153; this interaction might play a role in nuclear import of the pre-integration complex. Mg(2+) serves as cofactor. In terms of processing, specific enzymatic cleavages by the viral protease yield mature proteins. The protease is released by autocatalytic cleavage. The polyprotein is cleaved during and after budding, this process is termed maturation. Proteolytic cleavage of p66 RT removes the RNase H domain to yield the p51 RT subunit. Nucleocapsid protein p7 might be further cleaved after virus entry.

The protein resides in the host cell membrane. Its subcellular location is the host endosome. It is found in the host multivesicular body. The protein localises to the virion membrane. It localises to the host nucleus. The protein resides in the host cytoplasm. Its subcellular location is the virion. It catalyses the reaction Endopeptidase for which the P1 residue is preferably hydrophobic.. The catalysed reaction is Endohydrolysis of RNA in RNA/DNA hybrids. Three different cleavage modes: 1. sequence-specific internal cleavage of RNA. Human immunodeficiency virus type 1 and Moloney murine leukemia virus enzymes prefer to cleave the RNA strand one nucleotide away from the RNA-DNA junction. 2. RNA 5'-end directed cleavage 13-19 nucleotides from the RNA end. 3. DNA 3'-end directed cleavage 15-20 nucleotides away from the primer terminus.. The enzyme catalyses 3'-end directed exonucleolytic cleavage of viral RNA-DNA hybrid.. It carries out the reaction DNA(n) + a 2'-deoxyribonucleoside 5'-triphosphate = DNA(n+1) + diphosphate. With respect to regulation, protease: The viral protease is inhibited by many synthetic protease inhibitors (PIs), such as amprenavir, atazanavir, indinavir, loprinavir, nelfinavir, ritonavir and saquinavir. Use of protease inhibitors in tritherapy regimens permit more ambitious therapeutic strategies. Reverse transcriptase/ribonuclease H: RT can be inhibited either by nucleoside RT inhibitors (NRTIs) or by non nucleoside RT inhibitors (NNRTIs). NRTIs act as chain terminators, whereas NNRTIs inhibit DNA polymerization by binding a small hydrophobic pocket near the RT active site and inducing an allosteric change in this region. Classical NRTIs are abacavir, adefovir (PMEA), didanosine (ddI), lamivudine (3TC), stavudine (d4T), tenofovir (PMPA), zalcitabine (ddC), and zidovudine (AZT). Classical NNRTIs are atevirdine (BHAP U-87201E), delavirdine, efavirenz (DMP-266), emivirine (I-EBU), and nevirapine (BI-RG-587). The tritherapies used as a basic effective treatment of AIDS associate two NRTIs and one NNRTI. Its function is as follows. Mediates, with Gag polyprotein, the essential events in virion assembly, including binding the plasma membrane, making the protein-protein interactions necessary to create spherical particles, recruiting the viral Env proteins, and packaging the genomic RNA via direct interactions with the RNA packaging sequence (Psi). Gag-Pol polyprotein may regulate its own translation, by the binding genomic RNA in the 5'-UTR. At low concentration, the polyprotein would promote translation, whereas at high concentration, the polyprotein would encapsidate genomic RNA and then shut off translation. Targets the polyprotein to the plasma membrane via a multipartite membrane-binding signal, that includes its myristoylated N-terminus. Matrix protein is part of the pre-integration complex. Implicated in the release from host cell mediated by Vpu. Binds to RNA. Functionally, forms the conical core that encapsulates the genomic RNA-nucleocapsid complex in the virion. Most core are conical, with only 7% tubular. The core is constituted by capsid protein hexamer subunits. The core is disassembled soon after virion entry. Host restriction factors such as TRIM5-alpha or TRIMCyp bind retroviral capsids and cause premature capsid disassembly, leading to blocks in reverse transcription. Capsid restriction by TRIM5 is one of the factors which restricts HIV-1 to the human species. Host PIN1 apparently facilitates the virion uncoating. On the other hand, interactions with PDZD8 or CYPA stabilize the capsid. In terms of biological role, encapsulates and protects viral dimeric unspliced genomic RNA (gRNA). Binds these RNAs through its zinc fingers. Acts as a nucleic acid chaperone which is involved in rearangement of nucleic acid secondary structure during gRNA retrotranscription. Also facilitates template switch leading to recombination. As part of the polyprotein, participates in gRNA dimerization, packaging, tRNA incorporation and virion assembly. Its function is as follows. Aspartyl protease that mediates proteolytic cleavages of Gag and Gag-Pol polyproteins during or shortly after the release of the virion from the plasma membrane. Cleavages take place as an ordered, step-wise cascade to yield mature proteins. This process is called maturation. Displays maximal activity during the budding process just prior to particle release from the cell. Also cleaves Nef and Vif, probably concomitantly with viral structural proteins on maturation of virus particles. Hydrolyzes host EIF4GI and PABP1 in order to shut off the capped cellular mRNA translation. The resulting inhibition of cellular protein synthesis serves to ensure maximal viral gene expression and to evade host immune response. Multifunctional enzyme that converts the viral RNA genome into dsDNA in the cytoplasm, shortly after virus entry into the cell. This enzyme displays a DNA polymerase activity that can copy either DNA or RNA templates, and a ribonuclease H (RNase H) activity that cleaves the RNA strand of RNA-DNA heteroduplexes in a partially processive 3' to 5' endonucleasic mode. Conversion of viral genomic RNA into dsDNA requires many steps. A tRNA(3)-Lys binds to the primer-binding site (PBS) situated at the 5'-end of the viral RNA. RT uses the 3' end of the tRNA primer to perform a short round of RNA-dependent minus-strand DNA synthesis. The reading proceeds through the U5 region and ends after the repeated (R) region which is present at both ends of viral RNA. The portion of the RNA-DNA heteroduplex is digested by the RNase H, resulting in a ssDNA product attached to the tRNA primer. This ssDNA/tRNA hybridizes with the identical R region situated at the 3' end of viral RNA. This template exchange, known as minus-strand DNA strong stop transfer, can be either intra- or intermolecular. RT uses the 3' end of this newly synthesized short ssDNA to perform the RNA-dependent minus-strand DNA synthesis of the whole template. RNase H digests the RNA template except for two polypurine tracts (PPTs) situated at the 5'-end and near the center of the genome. It is not clear if both polymerase and RNase H activities are simultaneous. RNase H probably can proceed both in a polymerase-dependent (RNA cut into small fragments by the same RT performing DNA synthesis) and a polymerase-independent mode (cleavage of remaining RNA fragments by free RTs). Secondly, RT performs DNA-directed plus-strand DNA synthesis using the PPTs that have not been removed by RNase H as primers. PPTs and tRNA primers are then removed by RNase H. The 3' and 5' ssDNA PBS regions hybridize to form a circular dsDNA intermediate. Strand displacement synthesis by RT to the PBS and PPT ends produces a blunt ended, linear dsDNA copy of the viral genome that includes long terminal repeats (LTRs) at both ends. Functionally, catalyzes viral DNA integration into the host chromosome, by performing a series of DNA cutting and joining reactions. This enzyme activity takes place after virion entry into a cell and reverse transcription of the RNA genome in dsDNA. The first step in the integration process is 3' processing. This step requires a complex comprising the viral genome, matrix protein, Vpr and integrase. This complex is called the pre-integration complex (PIC). The integrase protein removes 2 nucleotides from each 3' end of the viral DNA, leaving recessed CA OH's at the 3' ends. In the second step, the PIC enters cell nucleus. This process is mediated through integrase and Vpr proteins, and allows the virus to infect a non dividing cell. This ability to enter the nucleus is specific of lentiviruses, other retroviruses cannot and rely on cell division to access cell chromosomes. In the third step, termed strand transfer, the integrase protein joins the previously processed 3' ends to the 5' ends of strands of target cellular DNA at the site of integration. The 5'-ends are produced by integrase-catalyzed staggered cuts, 5 bp apart. A Y-shaped, gapped, recombination intermediate results, with the 5'-ends of the viral DNA strands and the 3' ends of target DNA strands remaining unjoined, flanking a gap of 5 bp. The last step is viral DNA integration into host chromosome. This involves host DNA repair synthesis in which the 5 bp gaps between the unjoined strands are filled in and then ligated. Since this process occurs at both cuts flanking the HIV genome, a 5 bp duplication of host DNA is produced at the ends of HIV-1 integration. Alternatively, Integrase may catalyze the excision of viral DNA just after strand transfer, this is termed disintegration. The polypeptide is Gag-Pol polyprotein (gag-pol) (Human immunodeficiency virus type 2 subtype A (isolate SBLISY) (HIV-2)).